The chain runs to 128 residues: uncharacterized protein (128 aa).

A disordered region spans residues 24-43; the sequence is KRTQNNTEQASRAINSPLQS. Residues 26–43 are compositionally biased toward polar residues; that stretch reads TQNNTEQASRAINSPLQS.

This is an uncharacterized protein from Homo sapiens (Human).